Here is a 193-residue protein sequence, read N- to C-terminus: Dirigent protein 11 (193 aa).

The signal sequence occupies residues 1–33; that stretch reads MLQITNMATPFLLLLLPLIFSTVLLLTITVTQS. 2 N-linked (GlcNAc...) asparagine glycosylation sites follow: N78 and N136.

It belongs to the plant dirigent protein family. In terms of assembly, homodimer.

The protein resides in the secreted. Its subcellular location is the extracellular space. It is found in the apoplast. Its function is as follows. Dirigent proteins impart stereoselectivity on the phenoxy radical-coupling reaction, yielding optically active lignans from two molecules of coniferyl alcohol in the biosynthesis of lignans, flavonolignans, and alkaloids and thus plays a central role in plant secondary metabolism. This chain is Dirigent protein 11 (DIR11), found in Arabidopsis thaliana (Mouse-ear cress).